A 152-amino-acid polypeptide reads, in one-letter code: Glycine cleavage system H protein, mitochondrial (152 aa).

A mitochondrion-targeting transit peptide spans 1–31 (MALRMWASSTANALRLSSATRPHYSPLSRCF). Residues 53–135 (VATVGITDHA…YEDGWMIKVK (83 aa)) form the Lipoyl-binding domain. K94 carries the N6-lipoyllysine modification.

The protein belongs to the GcvH family. The glycine cleavage system is composed of four proteins: P, T, L and H. (R)-lipoate serves as cofactor.

It localises to the mitochondrion. Its function is as follows. The glycine cleavage system catalyzes the degradation of glycine. The H protein shuttles the methylamine group of glycine from the P protein to the T protein. The chain is Glycine cleavage system H protein, mitochondrial (GDCSH) from Flaveria pubescens (Yellowtops).